The primary structure comprises 337 residues: GTP 3',8-cyclase (337 aa).

In terms of domain architecture, Radical SAM core spans Thr-17 to Ala-242. Arg-26 serves as a coordination point for GTP. 2 residues coordinate [4Fe-4S] cluster: Cys-33 and Cys-37. Tyr-39 contacts S-adenosyl-L-methionine. Position 40 (Cys-40) interacts with [4Fe-4S] cluster. Arg-76 contributes to the GTP binding site. Position 80 (Gly-80) interacts with S-adenosyl-L-methionine. Thr-107 contributes to the GTP binding site. Ser-131 is an S-adenosyl-L-methionine binding site. Lys-168 is a binding site for GTP. Position 202 (Met-202) interacts with S-adenosyl-L-methionine. The [4Fe-4S] cluster site is built by Cys-265 and Cys-268. Arg-270–Arg-272 contacts GTP. Cys-282 provides a ligand contact to [4Fe-4S] cluster.

The protein belongs to the radical SAM superfamily. MoaA family. Monomer and homodimer. [4Fe-4S] cluster serves as cofactor.

It catalyses the reaction GTP + AH2 + S-adenosyl-L-methionine = (8S)-3',8-cyclo-7,8-dihydroguanosine 5'-triphosphate + 5'-deoxyadenosine + L-methionine + A + H(+). It functions in the pathway cofactor biosynthesis; molybdopterin biosynthesis. Catalyzes the cyclization of GTP to (8S)-3',8-cyclo-7,8-dihydroguanosine 5'-triphosphate. The chain is GTP 3',8-cyclase from Mannheimia succiniciproducens (strain KCTC 0769BP / MBEL55E).